A 669-amino-acid chain; its full sequence is DNA mismatch repair protein MutL (669 aa).

2 disordered regions span residues 354 to 402 (NRPA…ENPY) and 448 to 479 (TVSHDSPPNRTAPDATTSSSKPRAPIESPLES). The segment covering 448-468 (TVSHDSPPNRTAPDATTSSSK) has biased composition (polar residues).

It belongs to the DNA mismatch repair MutL/HexB family.

Its function is as follows. This protein is involved in the repair of mismatches in DNA. It is required for dam-dependent methyl-directed DNA mismatch repair. May act as a 'molecular matchmaker', a protein that promotes the formation of a stable complex between two or more DNA-binding proteins in an ATP-dependent manner without itself being part of a final effector complex. This chain is DNA mismatch repair protein MutL, found in Pectobacterium carotovorum subsp. carotovorum (strain PC1).